The following is a 78-amino-acid chain: Acyl carrier protein (78 aa).

The region spanning 2-77 is the Carrier domain; it reads SDTAERVKKI…DAVKFIDKAS (76 aa). O-(pantetheine 4'-phosphoryl)serine is present on S37.

Belongs to the acyl carrier protein (ACP) family. Post-translationally, 4'-phosphopantetheine is transferred from CoA to a specific serine of apo-ACP by AcpS. This modification is essential for activity because fatty acids are bound in thioester linkage to the sulfhydryl of the prosthetic group.

It localises to the cytoplasm. It functions in the pathway lipid metabolism; fatty acid biosynthesis. Functionally, carrier of the growing fatty acid chain in fatty acid biosynthesis. This chain is Acyl carrier protein, found in Brucella abortus (strain S19).